The primary structure comprises 577 residues: Outer spore wall assembly protein SHE10 (577 aa).

The first 23 residues, 1-23, serve as a signal peptide directing secretion; the sequence is MGKLIKLITTLTVLVSLLQYCCE. Coiled-coil stretches lie at residues 379 to 416 and 513 to 561; these read NETRSTLDELTNAMEKDLSEITDEIEKKVNAIREENVE and ILRS…EEDV. Over residues 525-545 the composition is skewed to basic and acidic residues; the sequence is RERKERERKEREKAAAEEFQR. Positions 525–577 are disordered; the sequence is RERKERERKEREKAAAEEFQRQQELLRQQEEEDEEDVSYTSTSTITTTTTMTL. The segment covering 562–577 has biased composition (low complexity); the sequence is SYTSTSTITTTTTMTL.

The protein belongs to the SHE10 family. Component of the mitochondria-localized RNase mitochondrial RNA-processing (RNase MRP) composed of one single RNA encoded by the NME1 gene and at least 31 proteins. Absent in the nucleus-localized RNase MRP (NuMRP).

The protein resides in the mitochondrion. In terms of biological role, involved in spore wall assembly. May be a component of the mitochondrial RNase MRP (MtMRP), a ribonucleoprotein endoribonuclease involved in the cleaving RNA transcripts to generate primers for DNA replication in mitochondria. The polypeptide is Outer spore wall assembly protein SHE10 (Saccharomyces cerevisiae (strain YJM789) (Baker's yeast)).